Here is a 78-residue protein sequence, read N- to C-terminus: Major outer membrane lipoprotein Lpp (78 aa).

The signal sequence occupies residues 1-20 (MKATKLVLGAVILGSTLLAG). Residue Cys21 is the site of N-palmitoyl cysteine attachment. Residue Cys21 is the site of S-diacylglycerol cysteine attachment. 2 repeats span residues 24 to 34 (NAKIDQLSSDV) and 38 to 48 (NAKVDQLSNDV). Residues 27–75 (IDQLSSDVQTLNAKVDQLSNDVNAMRSDVQAAKDDAARANQRLDNMATK) are a coiled coil. Lys78 carries the N6-murein peptidoglycan lysine modification.

It belongs to the Lpp family. Homotrimer.

Its subcellular location is the cell outer membrane. It is found in the secreted. It localises to the cell wall. Functionally, a highly abundant outer membrane lipoprotein that controls the distance between the inner and outer membranes. The only protein known to be covalently linked to the peptidoglycan network (PGN). Also non-covalently binds the PGN. The link between the cell outer membrane and PGN contributes to maintenance of the structural and functional integrity of the cell envelope, and maintains the correct distance between the PGN and the outer membrane. The chain is Major outer membrane lipoprotein Lpp from Shigella flexneri.